The primary structure comprises 254 residues: Imidazole glycerol phosphate synthase subunit HisF (254 aa).

Residues D12 and D131 contribute to the active site.

Belongs to the HisA/HisF family. As to quaternary structure, heterodimer of HisH and HisF.

Its subcellular location is the cytoplasm. The enzyme catalyses 5-[(5-phospho-1-deoxy-D-ribulos-1-ylimino)methylamino]-1-(5-phospho-beta-D-ribosyl)imidazole-4-carboxamide + L-glutamine = D-erythro-1-(imidazol-4-yl)glycerol 3-phosphate + 5-amino-1-(5-phospho-beta-D-ribosyl)imidazole-4-carboxamide + L-glutamate + H(+). It participates in amino-acid biosynthesis; L-histidine biosynthesis; L-histidine from 5-phospho-alpha-D-ribose 1-diphosphate: step 5/9. In terms of biological role, IGPS catalyzes the conversion of PRFAR and glutamine to IGP, AICAR and glutamate. The HisF subunit catalyzes the cyclization activity that produces IGP and AICAR from PRFAR using the ammonia provided by the HisH subunit. The chain is Imidazole glycerol phosphate synthase subunit HisF from Leifsonia xyli subsp. xyli (strain CTCB07).